The chain runs to 240 residues: Ribosomal RNA small subunit methyltransferase G (240 aa).

S-adenosyl-L-methionine contacts are provided by residues Gly79, 130 to 131, and Arg149; that span reads AE.

This sequence belongs to the methyltransferase superfamily. RNA methyltransferase RsmG family.

Its subcellular location is the cytoplasm. Functionally, specifically methylates the N7 position of a guanine in 16S rRNA. This chain is Ribosomal RNA small subunit methyltransferase G, found in Moorella thermoacetica (strain ATCC 39073 / JCM 9320).